The following is a 212-amino-acid chain: External core antigen (212 aa).

The signal sequence occupies residues M1 to A19. The segment at G25 to L27 is HBEAG. Positions N165–C212 are disordered. Residues V178–S205 are compositionally biased toward basic residues. One copy of the 1; half-length repeat lies at S184 to P190. The segment at S184–Q206 is 3 X 8 AA repeats of S-P-R-R-R-R-S-Q. Positions S184–C212 are excised as a propeptide. 2 consecutive repeat copies span residues S191–Q198 and S199–Q206.

This sequence belongs to the orthohepadnavirus precore antigen family. As to quaternary structure, homodimerizes. Phosphorylated. Post-translationally, cleaved by host furin.

Its subcellular location is the secreted. The protein localises to the host nucleus. May regulate immune response to the intracellular capsid in acting as a T-cell tolerogen, by having an immunoregulatory effect which prevents destruction of infected cells by cytotoxic T-cells. This immune regulation may predispose to chronicity during perinatal infections and prevent severe liver injury during adult infections. The sequence is that of External core antigen from Hepatitis B virus genotype B1 subtype adw (isolate Japan/pJDW233/1988) (HBV-B).